The primary structure comprises 239 residues: Putative ABC transporter ATP-binding protein AlbC (239 aa).

An ABC transporter domain is found at 4 to 238; sequence LDIHDVSVWY…RREFFEVIGH (235 aa). 37-44 provides a ligand contact to ATP; that stretch reads GVNGAGKT.

This sequence belongs to the ABC transporter superfamily.

Its function is as follows. Involved in the production of the bacteriocin subtilosin. Required for immunity to subtilosin. This Bacillus subtilis (strain 168) protein is Putative ABC transporter ATP-binding protein AlbC (albC).